Reading from the N-terminus, the 384-residue chain is Flap endonuclease 1 (384 aa).

An N-domain region spans residues 1–108 (MGIHKLMDLL…GELARRQKAK (108 aa)). Position 34 (aspartate 34) interacts with Mg(2+). Arginine 74 contributes to the DNA binding site. Aspartate 90, glutamate 162, glutamate 164, aspartate 183, and aspartate 185 together coordinate Mg(2+). The segment at 126 to 254 (EALKQEQRNL…VNAFKLITEH (129 aa)) is I-domain. Glutamate 162 lines the DNA pocket. Glycine 232 and aspartate 234 together coordinate DNA. Position 234 (aspartate 234) interacts with Mg(2+). A disordered region spans residues 340 to 384 (AKEHKGSQTRLNDFFKVQPKDTSSTSKASKKPTNTKSANKKGGKK). The segment at 346 to 354 (SQTRLNDFF) is interaction with PCNA. Low complexity predominate over residues 359–376 (KDTSSTSKASKKPTNTKS).

Belongs to the XPG/RAD2 endonuclease family. FEN1 subfamily. In terms of assembly, interacts with PCNA. Three molecules of FEN1 bind to one PCNA trimer with each molecule binding to one PCNA monomer. PCNA stimulates the nuclease activity without altering cleavage specificity. Requires Mg(2+) as cofactor. Post-translationally, phosphorylated. Phosphorylation upon DNA damage induces relocalization to the nuclear plasma.

It is found in the nucleus. It localises to the nucleolus. The protein resides in the nucleoplasm. Its subcellular location is the mitochondrion. Functionally, structure-specific nuclease with 5'-flap endonuclease and 5'-3' exonuclease activities involved in DNA replication and repair. During DNA replication, cleaves the 5'-overhanging flap structure that is generated by displacement synthesis when DNA polymerase encounters the 5'-end of a downstream Okazaki fragment. It enters the flap from the 5'-end and then tracks to cleave the flap base, leaving a nick for ligation. Also involved in the long patch base excision repair (LP-BER) pathway, by cleaving within the apurinic/apyrimidinic (AP) site-terminated flap. Acts as a genome stabilization factor that prevents flaps from equilibrating into structures that lead to duplications and deletions. Also possesses 5'-3' exonuclease activity on nicked or gapped double-stranded DNA, and exhibits RNase H activity. Also involved in replication and repair of rDNA and in repairing mitochondrial DNA. The polypeptide is Flap endonuclease 1 (Tetrahymena thermophila (strain SB210)).